Reading from the N-terminus, the 141-residue chain is 6,7-dimethyl-8-ribityllumazine synthase (141 aa).

5-amino-6-(D-ribitylamino)uracil is bound by residues phenylalanine 14, 46 to 48, and 70 to 72; these read VFD and CVI. 75-76 provides a ligand contact to (2S)-2-hydroxy-3-oxobutyl phosphate; that stretch reads ET. Residue histidine 78 is the Proton donor of the active site. Position 103 (leucine 103) interacts with 5-amino-6-(D-ribitylamino)uracil. Arginine 118 is a (2S)-2-hydroxy-3-oxobutyl phosphate binding site.

Forms an icosahedral capsid composed of 60 subunits, arranged as a dodecamer of pentamers.

It catalyses the reaction (2S)-2-hydroxy-3-oxobutyl phosphate + 5-amino-6-(D-ribitylamino)uracil = 6,7-dimethyl-8-(1-D-ribityl)lumazine + phosphate + 2 H2O + H(+). It participates in cofactor biosynthesis; riboflavin biosynthesis; riboflavin from 2-hydroxy-3-oxobutyl phosphate and 5-amino-6-(D-ribitylamino)uracil: step 1/2. In terms of biological role, catalyzes the formation of 6,7-dimethyl-8-ribityllumazine by condensation of 5-amino-6-(D-ribitylamino)uracil with 3,4-dihydroxy-2-butanone 4-phosphate. This is the penultimate step in the biosynthesis of riboflavin. The protein is 6,7-dimethyl-8-ribityllumazine synthase (ribH) of Methanocaldococcus jannaschii (strain ATCC 43067 / DSM 2661 / JAL-1 / JCM 10045 / NBRC 100440) (Methanococcus jannaschii).